Here is a 181-residue protein sequence, read N- to C-terminus: 30 kDa heat shock protein (181 aa).

Positions 33–181 (ASVQSFAPRF…PPTAKKITIQ (149 aa)) constitute a sHSP domain. The span at 79–115 (GRSEREYHSSSDDNKNDQADTENQARGESSEVAKTGE) shows a compositional bias: basic and acidic residues. Positions 79–127 (GRSEREYHSSSDDNKNDQADTENQARGESSEVAKTGEKQVSTKKAANKS) are disordered.

It belongs to the small heat shock protein (HSP20) family.

The sequence is that of 30 kDa heat shock protein (hsp30) from Emericella nidulans (strain FGSC A4 / ATCC 38163 / CBS 112.46 / NRRL 194 / M139) (Aspergillus nidulans).